The sequence spans 94 residues: Acylphosphatase (94 aa).

The region spanning 7–94 is the Acylphosphatase-like domain; the sequence is AVQARVYGRV…TAPGDFRIVA (88 aa). Active-site residues include Arg22 and Asn40.

This sequence belongs to the acylphosphatase family.

The enzyme catalyses an acyl phosphate + H2O = a carboxylate + phosphate + H(+). The sequence is that of Acylphosphatase (acyP) from Mesorhizobium japonicum (strain LMG 29417 / CECT 9101 / MAFF 303099) (Mesorhizobium loti (strain MAFF 303099)).